The chain runs to 368 residues: Phospho-N-acetylmuramoyl-pentapeptide-transferase (368 aa).

Transmembrane regions (helical) follow at residues 50-70, 95-115, 117-137, 156-176, 183-203, 218-238, 242-262, 284-304, and 347-367; these read LLAL…VVPL, PTMG…ILAG, SPLV…GWLD, LCLQ…QQGW, ITLP…LAVF, LDGL…LWLA, PAIA…LLHN, AIAI…LFVL, and TQVV…CWLL.

The protein belongs to the glycosyltransferase 4 family. MraY subfamily. Mg(2+) serves as cofactor.

The protein localises to the cell inner membrane. The catalysed reaction is UDP-N-acetyl-alpha-D-muramoyl-L-alanyl-gamma-D-glutamyl-meso-2,6-diaminopimeloyl-D-alanyl-D-alanine + di-trans,octa-cis-undecaprenyl phosphate = di-trans,octa-cis-undecaprenyl diphospho-N-acetyl-alpha-D-muramoyl-L-alanyl-D-glutamyl-meso-2,6-diaminopimeloyl-D-alanyl-D-alanine + UMP. The protein operates within cell wall biogenesis; peptidoglycan biosynthesis. In terms of biological role, catalyzes the initial step of the lipid cycle reactions in the biosynthesis of the cell wall peptidoglycan: transfers peptidoglycan precursor phospho-MurNAc-pentapeptide from UDP-MurNAc-pentapeptide onto the lipid carrier undecaprenyl phosphate, yielding undecaprenyl-pyrophosphoryl-MurNAc-pentapeptide, known as lipid I. In Synechococcus sp. (strain ATCC 27144 / PCC 6301 / SAUG 1402/1) (Anacystis nidulans), this protein is Phospho-N-acetylmuramoyl-pentapeptide-transferase.